Consider the following 48-residue polypeptide: Gas vesicle protein A (48 aa).

The protein belongs to the gas vesicle GvpA family. In terms of assembly, the gas vesicle shell is 2 nm thick and consists of a single layer of this protein. It forms helical ribs nearly perpendicular to the long axis of the vesicle.

It localises to the gas vesicle shell. Its function is as follows. Gas vesicles are hollow, gas filled proteinaceous nanostructures found in some microorganisms. During planktonic growth they allow positioning of the organism at a favorable depth for light or nutrient acquisition. GvpA forms the protein shell. The chain is Gas vesicle protein A from Spirulina sp. (strain CCAP 1475/10).